A 273-amino-acid chain; its full sequence is Thioredoxin-like 1-3, chloroplastic (273 aa).

The transit peptide at 1–44 (MATDSFIKLNPISFNRARFDLRDFAGISPKSISSLCCISPRLIS) directs the protein to the chloroplast. Residues 62 to 202 (LFSKKKIPAF…FKEALEKHGR (141 aa)) form the Thioredoxin domain. Catalysis depends on nucleophile residues C125 and C128. Residues C125 and C128 are joined by a disulfide bond.

Belongs to the thioredoxin family.

It is found in the plastid. The protein localises to the chloroplast. In terms of biological role, probable thiol-disulfide oxidoreductase that may participate in various redox reactions. The chain is Thioredoxin-like 1-3, chloroplastic from Arabidopsis thaliana (Mouse-ear cress).